A 453-amino-acid chain; its full sequence is Bestrophin homolog 5 (453 aa).

The next 4 helical transmembrane spans lie at 78-98, 113-133, 275-295, and 314-334; these read ELIVWICAYSLVSVIYRFALT, DARMGYLPLNFVLGFFCNIII, IPLMYPQLVNMAVHTYFFLCI, and LYIPFMTIIEFIFYMGWLKVA.

This sequence belongs to the anion channel-forming bestrophin (TC 1.A.46) family. Calcium-sensitive chloride channel subfamily. In terms of assembly, forms oligomers.

The protein resides in the cell membrane. Functionally, forms chloride channels. The sequence is that of Bestrophin homolog 5 (best-5) from Caenorhabditis elegans.